We begin with the raw amino-acid sequence, 170 residues long: Adenine phosphoribosyltransferase (170 aa).

It belongs to the purine/pyrimidine phosphoribosyltransferase family. Homodimer.

The protein resides in the cytoplasm. It catalyses the reaction AMP + diphosphate = 5-phospho-alpha-D-ribose 1-diphosphate + adenine. The protein operates within purine metabolism; AMP biosynthesis via salvage pathway; AMP from adenine: step 1/1. Its function is as follows. Catalyzes a salvage reaction resulting in the formation of AMP, that is energically less costly than de novo synthesis. The chain is Adenine phosphoribosyltransferase from Lactococcus lactis subsp. cremoris (strain MG1363).